The chain runs to 432 residues: Monooxygenase penA (432 aa).

A helical membrane pass occupies residues F7–P29. N-linked (GlcNAc...) asparagine glycosylation occurs at N33.

Belongs to the aromatic-ring hydroxylase family. Requires FAD as cofactor.

The protein localises to the membrane. It participates in secondary metabolite biosynthesis. It functions in the pathway alkaloid biosynthesis. The protein operates within mycotoxin biosynthesis. Monooxygenase; part of the gene cluster that mediates the biosynthesis of penigequinolones, potent insecticidal alkaloids that contain a highly modified 10-carbon prenyl group. The first stage is catalyzed by the nonribosomal peptide synthetase penN that condenses anthranilic acid and O-methyl-L-tyrosine to produce 4'-methoxycyclopeptin. 4'-methoxycyclopeptin is then converted to 4'-methoxydehydrocyclopeptin by the ketoglutarate-dependent dioxygenase penM through dehydrogenation to form a double bond between C-alpha and C-beta of the O-methyltyrosine side chain. PenM also converts its first product methoxydehydrocyclopeptin to 4'-methoxycyclopenin. The following conversion of 4'methoxycyclopenin into 4'-methoxyviridicatin is catalyzed by the cyclopenase penL. 4'-methoxyviridicatin is the precursor of quinolone natural products, and is further converted to quinolinone B. The prenyltransferase penI then catalyzes the canonical Friedel-Crafts alkylation of quinolinone B with dimethylallyl cation to yield dimethylallyl quinolone, which is subjected to FAD-dependent dehydrogenation by the FAD-linked oxidoreductase penH to yield conjugated aryl diene. The delta(3') double bond then serves as the site of the second alkylation with DMAPP catalyzed by the prenyltransferase penG to yield a carbenium ion intermediate, which can be attacked by H(2)O to yield a styrenyl quinolone containing a C3'-hydroxyprenyl chain, or undergo cyclization to yield yaequinolones J1 and J2. The conversion of the styrenyl quinolone into the tetrahydrofuran-containing yaequinolone C is performed by the FAD-dependent monooxygenase penE and involves epoxidation of the terminal C7'-C8' olefin, followed by epoxide ring opening initiated by the C3' hydroxyl group. The predicted cysteine hydrolase penJ acts as an epoxide hydrolase that enhances the rate of the 5-exo-tet cyclization step, increasing the yield of yaequinolone C. PenF catalyzes the cationic rearrangement of the epoxide formed by penE (before ring opening to produce yaequinolone C) into yaequinolone D. Finally, the short-chain dehydrogenase/reductase (SDR)-like reductase penD, catalyzes both the dehydration of yaequinolone D and the reduction of the resulting oxonium to yield penigequinolone. This chain is Monooxygenase penA, found in Penicillium thymicola.